Here is a 330-residue protein sequence, read N- to C-terminus: MDQYLIKMSTKSKNNDKTEQNIPIKENTTRQTKDAKEKIATANKRKNKDTPEIIKDKENADTENPPKRRSARLTRSTRSMAEDGTPSPEKEIPEKLPFIKYRGAIKYYTESHEIAASADEVMQWVEKQTNADVVPLAFDMEWPFSFQTGPGKSSVIQICVEERCCYVYQLSKLKRIPAALVALLNHSKVRLHGVNIKADFRKLERDFPEVAAEPLIEKCIDLGVWCNEVCETGGRWSLERLANFIAKKAMDKSKKVRMSKWHVIPLDENQLMYAAIDVYIGQVIYRDIEQREKTKLKNEAEFKDQNGDAAFKAVKALGETFLAKINEVTL.

The interval 1–92 is disordered; the sequence is MDQYLIKMST…DGTPSPEKEI (92 aa). 2 stretches are compositionally biased toward basic and acidic residues: residues 27-39 and 48-66; these read NTTR…KEKI and KDTP…ENPP. Residues Ser-79 and Ser-87 each carry the phosphoserine modification. The region spanning 117–289 is the 3'-5' exonuclease domain; that stretch reads SADEVMQWVE…IGQVIYRDIE (173 aa). Mg(2+) is bound by residues Asp-139, Glu-141, and Asp-277.

It belongs to the WRNexo family.

The protein localises to the nucleus. In terms of biological role, has exonuclease activity on both single-stranded and duplex templates bearing overhangs, but not blunt ended duplex DNA, and cleaves in a 3'-5' direction. Essential for the formation of DNA replication focal centers. Has an important role in maintaining genome stability. In Drosophila virilis (Fruit fly), this protein is 3'-5' exonuclease.